A 99-amino-acid polypeptide reads, in one-letter code: MANIKSAIKRIQTAERNRLRNKSYKSAVKTLTKKCLQAIEQYAAAPSADAQAEAQKYLSATYSKIDKAVKRGVYHHNTAARKKARLAKEFKQATGQVAA.

It belongs to the bacterial ribosomal protein bS20 family.

Its function is as follows. Binds directly to 16S ribosomal RNA. This Picosynechococcus sp. (strain ATCC 27264 / PCC 7002 / PR-6) (Agmenellum quadruplicatum) protein is Small ribosomal subunit protein bS20.